A 104-amino-acid chain; its full sequence is Large ribosomal subunit protein bL21 (104 aa).

It belongs to the bacterial ribosomal protein bL21 family. Part of the 50S ribosomal subunit. Contacts protein L20.

Its function is as follows. This protein binds to 23S rRNA in the presence of protein L20. This chain is Large ribosomal subunit protein bL21, found in Helicobacter pylori (strain P12).